The sequence spans 410 residues: Serine hydroxymethyltransferase (410 aa).

(6S)-5,6,7,8-tetrahydrofolate contacts are provided by residues leucine 116 and 120–122 (GHL). Lysine 225 is modified (N6-(pyridoxal phosphate)lysine). (6S)-5,6,7,8-tetrahydrofolate is bound at residue 349-351 (SPF).

Belongs to the SHMT family. In terms of assembly, homodimer. Pyridoxal 5'-phosphate serves as cofactor.

The protein localises to the cytoplasm. It catalyses the reaction (6R)-5,10-methylene-5,6,7,8-tetrahydrofolate + glycine + H2O = (6S)-5,6,7,8-tetrahydrofolate + L-serine. It participates in one-carbon metabolism; tetrahydrofolate interconversion. Its pathway is amino-acid biosynthesis; glycine biosynthesis; glycine from L-serine: step 1/1. In terms of biological role, catalyzes the reversible interconversion of serine and glycine with tetrahydrofolate (THF) serving as the one-carbon carrier. This reaction serves as the major source of one-carbon groups required for the biosynthesis of purines, thymidylate, methionine, and other important biomolecules. Also exhibits THF-independent aldolase activity toward beta-hydroxyamino acids, producing glycine and aldehydes, via a retro-aldol mechanism. This chain is Serine hydroxymethyltransferase, found in Leuconostoc mesenteroides subsp. mesenteroides (strain ATCC 8293 / DSM 20343 / BCRC 11652 / CCM 1803 / JCM 6124 / NCDO 523 / NBRC 100496 / NCIMB 8023 / NCTC 12954 / NRRL B-1118 / 37Y).